Reading from the N-terminus, the 737-residue chain is Propionyl-CoA carboxylase alpha chain, mitochondrial (737 aa).

The N-terminal 61 residues, 1–61 (MAGLWVRTVA…QCLVVSRSLS (61 aa)), are a transit peptide targeting the mitochondrion. Residues 71–518 (TFDKILIANR…STKFLSDVYP (448 aa)) form the Biotin carboxylation domain. Position 74 is an N6-acetyllysine; alternate (lysine 74). Lysine 74 is subject to N6-succinyllysine; alternate. Position 128 is an N6-succinyllysine (lysine 128). Lysine 159 carries the post-translational modification N6-acetyllysine; alternate. Lysine 159 carries the post-translational modification N6-succinyllysine; alternate. Lysine 163 carries the N6-acetyllysine modification. ATP is bound at residue lysine 186. The region spanning 190-387 (KLLAKRAKVN…LVQEMILVAK (198 aa)) is the ATP-grasp domain. Lysine 197 carries the N6-succinyllysine modification. At lysine 209 the chain carries N6-acetyllysine; alternate. An N6-succinyllysine; alternate modification is found at lysine 209. Residues 218–279 (AREI…PRHI), glutamate 270, and asparagine 305 each bind ATP. Position 261 is a phosphoserine (serine 261). Lysine 271 is modified (N6-succinyllysine). The residue at position 337 (lysine 337) is an N6-acetyllysine; alternate. The residue at position 337 (lysine 337) is an N6-succinyllysine; alternate. Glutamate 345, glutamate 358, and asparagine 360 together coordinate Mg(2+). The Mn(2+) site is built by glutamate 345, glutamate 358, and asparagine 360. Residue arginine 362 is part of the active site. N6-succinyllysine occurs at positions 394 and 416. A biotin-binding site is contributed by phenylalanine 418. Lysine 505 bears the N6-acetyllysine mark. N6-succinyllysine occurs at positions 511, 522, 567, and 657. One can recognise a Biotinyl-binding domain in the interval 658–737 (FMLEKVPKDT…GEGDLLVELE (80 aa)). N6-biotinyllysine; by HLCS is present on lysine 703.

As to quaternary structure, the holoenzyme is a dodecamer composed of 6 PCCA/alpha subunits and 6 PCCB/beta subunits. Interacts (via the biotin carboxylation domain) with SIRT4. Interacts with SIRT3 and SIRT5. It depends on biotin as a cofactor. Mg(2+) serves as cofactor. The cofactor is Mn(2+). In terms of processing, acetylated. The biotin cofactor is covalently attached to the C-terminal biotinyl-binding domain and is required for the catalytic activity. Biotinylation is catalyzed by HLCS.

It localises to the mitochondrion matrix. It carries out the reaction propanoyl-CoA + hydrogencarbonate + ATP = (S)-methylmalonyl-CoA + ADP + phosphate + H(+). It catalyses the reaction butanoyl-CoA + hydrogencarbonate + ATP = (2S)-ethylmalonyl-CoA + ADP + phosphate + H(+). It functions in the pathway metabolic intermediate metabolism; propanoyl-CoA degradation; succinyl-CoA from propanoyl-CoA: step 1/3. Its function is as follows. This is one of the 2 subunits of the biotin-dependent propionyl-CoA carboxylase (PCC), a mitochondrial enzyme involved in the catabolism of odd chain fatty acids, branched-chain amino acids isoleucine, threonine, methionine, and valine and other metabolites. Propionyl-CoA carboxylase catalyzes the carboxylation of propionyl-CoA/propanoyl-CoA to D-methylmalonyl-CoA/(S)-methylmalonyl-CoA. Within the holoenzyme, the alpha subunit catalyzes the ATP-dependent carboxylation of the biotin carried by the biotin carboxyl carrier (BCC) domain, while the beta subunit then transfers the carboxyl group from carboxylated biotin to propionyl-CoA. Propionyl-CoA carboxylase also significantly acts on butyryl-CoA/butanoyl-CoA, which is converted to ethylmalonyl-CoA/(2S)-ethylmalonyl-CoA. Other alternative minor substrates include (2E)-butenoyl-CoA/crotonoyl-CoA. This chain is Propionyl-CoA carboxylase alpha chain, mitochondrial, found in Rattus norvegicus (Rat).